A 270-amino-acid chain; its full sequence is Putative phosphoenolpyruvate synthase regulatory protein (270 aa).

151 to 158 (GVSRCGKT) contacts ADP.

The protein belongs to the pyruvate, phosphate/water dikinase regulatory protein family. PSRP subfamily.

The catalysed reaction is [pyruvate, water dikinase] + ADP = [pyruvate, water dikinase]-phosphate + AMP + H(+). It catalyses the reaction [pyruvate, water dikinase]-phosphate + phosphate + H(+) = [pyruvate, water dikinase] + diphosphate. Its function is as follows. Bifunctional serine/threonine kinase and phosphorylase involved in the regulation of the phosphoenolpyruvate synthase (PEPS) by catalyzing its phosphorylation/dephosphorylation. The sequence is that of Putative phosphoenolpyruvate synthase regulatory protein from Methylobacillus flagellatus (strain ATCC 51484 / DSM 6875 / VKM B-1610 / KT).